Here is a 484-residue protein sequence, read N- to C-terminus: MELNKLKLTELVPLISKGEVRPHEIIIDVFKRVQEVEGKVKAYITLTVEKAYDMAREAENAIFSGKKSLLTGIPIAVKDNICTKGILTTCASKILYNFYPPYESTVTSKLLNNKYILIGKTNMDEFAMGSSTENSGFHVTKNPWDLERVPGGSSGGSAAAVAADECIAALGSDTGGSIRQPASFCGVVGLKPTYGRVSRFGLVAFASSLDQIGPITKCVADAALLMNVISGHDPMDSTSAPIESSDFTEYLGKEVKGIKIGIPKEYFIEGMDKEVEERIKDAIKELESLGCIPVEISLPHTEYAVATYYIIATSEASSNLARYDGVKYGLRVQGKDLLEMYMKTRSRGFGTEVKRRIMLGTYSLSAGYYEAYYKKAQQVRTLIKNDFEKAFEKVDFIVTPTAPSPAFKIGEKIDDPLQMYLSDIFTISVNLAGVPAISLPCGFSEKGLPVGLQIIGKPFDEAGILQLAYAYEQSTPWHKMKPLL.

Residues lysine 78 and serine 153 each act as charge relay system in the active site. Serine 177 functions as the Acyl-ester intermediate in the catalytic mechanism.

The protein belongs to the amidase family. GatA subfamily. As to quaternary structure, heterotrimer of A, B and C subunits.

The enzyme catalyses L-glutamyl-tRNA(Gln) + L-glutamine + ATP + H2O = L-glutaminyl-tRNA(Gln) + L-glutamate + ADP + phosphate + H(+). Allows the formation of correctly charged Gln-tRNA(Gln) through the transamidation of misacylated Glu-tRNA(Gln) in organisms which lack glutaminyl-tRNA synthetase. The reaction takes place in the presence of glutamine and ATP through an activated gamma-phospho-Glu-tRNA(Gln). The protein is Glutamyl-tRNA(Gln) amidotransferase subunit A of Thermodesulfovibrio yellowstonii (strain ATCC 51303 / DSM 11347 / YP87).